A 397-amino-acid chain; its full sequence is Acetate kinase (397 aa).

Residue Asn-7 coordinates Mg(2+). An ATP-binding site is contributed by Lys-14. Residue Arg-91 participates in substrate binding. Asp-148 serves as the catalytic Proton donor/acceptor. Residues 208–212 (HLGNG), 283–285 (DFR), and 331–335 (GIGEN) contribute to the ATP site. Glu-384 lines the Mg(2+) pocket.

This sequence belongs to the acetokinase family. In terms of assembly, homodimer. Mg(2+) serves as cofactor. The cofactor is Mn(2+).

The protein resides in the cytoplasm. It catalyses the reaction acetate + ATP = acetyl phosphate + ADP. It participates in metabolic intermediate biosynthesis; acetyl-CoA biosynthesis; acetyl-CoA from acetate: step 1/2. In terms of biological role, catalyzes the formation of acetyl phosphate from acetate and ATP. Can also catalyze the reverse reaction. The polypeptide is Acetate kinase (Treponema denticola (strain ATCC 35405 / DSM 14222 / CIP 103919 / JCM 8153 / KCTC 15104)).